The chain runs to 1260 residues: Neural cell adhesion molecule L1 (1260 aa).

Residues 1–19 (MVVMLRYVWPLLLCSPCLL) form the signal peptide. The Extracellular segment spans residues 20 to 1123 (IQIPDEYKGH…VSTTGSFASE (1104 aa)). Ig-like C2-type domains lie at 35–130 (PVIT…IQLV), 138–225 (PKET…EPID), 239–327 (PRLL…YYVT), 332–419 (PYWL…AYIY), 424–506 (PARI…NNVT), and 517–600 (TQIT…DEVE). Cystine bridges form between cysteine 57-cysteine 113 and cysteine 157-cysteine 208. N-linked (GlcNAc...) asparagine glycosylation is found at asparagine 100, asparagine 202, asparagine 246, and asparagine 293. 2 disulfide bridges follow: cysteine 263/cysteine 311 and cysteine 353/cysteine 403. Asparagine 432, asparagine 478, asparagine 489, and asparagine 504 each carry an N-linked (GlcNAc...) asparagine glycan. Residues cysteine 447 and cysteine 496 are joined by a disulfide bond. A disulfide bond links cysteine 538 and cysteine 590. Short sequence motifs (cell attachment site) lie at residues 553–555 (RGD) and 562–564 (RGD). N-linked (GlcNAc...) asparagine glycans are attached at residues asparagine 587 and asparagine 670. Fibronectin type-III domains lie at 613 to 711 (PVPH…TPEA), 716 to 809 (NPVD…SGED), 811 to 916 (PQVS…PEGV), 919 to 1015 (HPEA…MALF), and 1014 to 1112 (LFGK…TGPV). The tract at residues 697–724 (GEPSPVSESVVTPEAAPEKNPVDVRGEG) is disordered. The segment covering 712-724 (APEKNPVDVRGEG) has biased composition (basic and acidic residues). N-linked (GlcNAc...) asparagine glycosylation is found at asparagine 725, asparagine 776, asparagine 824, asparagine 848, asparagine 875, asparagine 968, asparagine 978, asparagine 1022, asparagine 1030, asparagine 1073, and asparagine 1107. A helical transmembrane segment spans residues 1124-1146 (GWFIAFVSAIILLLLILLILCFI). The Cytoplasmic portion of the chain corresponds to 1147-1260 (KRSKGGKYSV…SPINPAVALE (114 aa)). 7 positions are modified to phosphoserine: serine 1166, serine 1181, serine 1184, serine 1197, serine 1246, serine 1247, and serine 1251. Disordered regions lie at residues 1183–1210 (ESDNEEKAFGSSQPSLNGDIKPLGSDDS) and 1229–1260 (IGQYSGKKEKEAAGGNDSSGATSPINPAVALE). Positions 1244–1253 (NDSSGATSPI) are enriched in polar residues.

The protein belongs to the immunoglobulin superfamily. L1/neurofascin/NgCAM family. As to quaternary structure, interacts with SHTN1; the interaction occurs in axonal growth cones. Interacts with isoform 2 of BSG. In terms of tissue distribution, expressed in the brain, including in the molecular layer of the cerebellar cortex, the fiber-rich layers of the hippocampus (alveus, and strata lacunosum moleculare, radiatum, and oriens), the nerve fiber layer and the inner and outer plexiform layers of the retina, and in the molecular layer of the olfactory bulb (at protein level).

The protein localises to the cell membrane. It localises to the cell projection. The protein resides in the growth cone. Functionally, neural cell adhesion molecule involved in the dynamics of cell adhesion and in the generation of transmembrane signals at tyrosine kinase receptors. During brain development, critical in multiple processes, including neuronal migration, axonal growth and fasciculation, and synaptogenesis. In the mature brain, plays a role in the dynamics of neuronal structure and function, including synaptic plasticity. This Mus musculus (Mouse) protein is Neural cell adhesion molecule L1 (L1cam).